Here is a 319-residue protein sequence, read N- to C-terminus: MLVATIFVLVGLVLLIWSADRFVYGASSIARNLNISPMIIGLTIVAMGSSAPEIMVSATAAWQGRLDTAVGNALGSNITNILLVIGATALLKPIAVASMTIKREFPLLILVTLLGYLFLADQSLTRAEGALFLGGFVLFLVLMVYWGKHAPPDDPLLTEYQAELPPPTPTWQATVWLVLGLALLLASSQLLVHGAVTIASHFGMSDLLIGLTIIAIGTSLPELAASLIGILKGEDDLALGNIIGSNIFNILAVLGVGTIIAPGVIDAAAAGRDSYVMMAATLALLLMSLRLGKLRRINRVEGCILLMAFIGYQYLLFSS.

The next 10 helical transmembrane spans lie at 3 to 23 (VATIFVLVGLVLLIWSADRFV), 38 to 58 (MIIGLTIVAMGSSAPEIMVSA), 81 to 101 (ILLVIGATALLKPIAVASMTI), 105 to 125 (FPLLILVTLLGYLFLADQSLT), 127 to 147 (AEGALFLGGFVLFLVLMVYWG), 175 to 195 (VWLVLGLALLLASSQLLVHGA), 208 to 228 (LIGLTIIAIGTSLPELAASLI), 250 to 270 (ILAVLGVGTIIAPGVIDAAAA), 275 to 292 (YVMMAATLALLLMSLRLG), and 297 to 317 (INRVEGCILLMAFIGYQYLLF).

The protein belongs to the Ca(2+):cation antiporter (CaCA) (TC 2.A.19) family.

It is found in the cell membrane. Functionally, confers modest Ca(2+) and Na(+) resistance. The protein is Putative antiporter CaxA (caxA) of Alkalimonas amylolytica.